A 73-amino-acid chain; its full sequence is Dermaseptin-1 (73 aa).

Positions 1–22 (MAFLKKSIFLALFLGMVSLSIC) are cleaved as a signal peptide. A propeptide spans 23 to 43 (EEEKRENEGEEEQEDDEQSEM) (removed in mature form). Residues 25–46 (EKRENEGEEEQEDDEQSEMKRG) are disordered. The span at 30 to 40 (EGEEEQEDDEQ) shows a compositional bias: acidic residues. Leu70 carries the post-translational modification Leucine amide. Positions 72-73 (EQ) are cleaved as a propeptide — removed in mature form.

In terms of tissue distribution, expressed by the skin glands.

Its subcellular location is the secreted. Functionally, has antiparasitic activity against trypomastigote form of T.cruzi (IC(50)=0.68 uM) in vitro but not against L.infantum. Probably acts by permeabilizing cell membranes. In vitro, shows no cytotoxicity against macrophages. Has antibacterial activity. The chain is Dermaseptin-1 from Pithecopus nordestinus (Northeastern Brazilian leaf frog).